Here is a 708-residue protein sequence, read N- to C-terminus: Ion-translocating oxidoreductase complex subunit C (708 aa).

2 4Fe-4S ferredoxin-type domains span residues 369-397 (GEPQEEQSCIRCSACADACPADLLPQQLY) and 407-436 (KATTHNIADCIECGACAWVCPSNIPLVQYF). [4Fe-4S] cluster is bound by residues C377, C380, C383, C387, C416, C419, C422, and C426. Residues 663–684 (KARKLEQQQTNAEPEEQVDPRK) are disordered.

Belongs to the 4Fe4S bacterial-type ferredoxin family. RnfC subfamily. As to quaternary structure, the complex is composed of six subunits: RsxA, RsxB, RsxC, RsxD, RsxE and RsxG. [4Fe-4S] cluster is required as a cofactor.

The protein localises to the cell inner membrane. Part of a membrane-bound complex that couples electron transfer with translocation of ions across the membrane. Required to maintain the reduced state of SoxR. This is Ion-translocating oxidoreductase complex subunit C from Shigella boydii serotype 18 (strain CDC 3083-94 / BS512).